The sequence spans 360 residues: Peptide chain release factor 1 (360 aa).

Q236 is modified (N5-methylglutamine).

Belongs to the prokaryotic/mitochondrial release factor family. Post-translationally, methylated by PrmC. Methylation increases the termination efficiency of RF1.

It localises to the cytoplasm. Functionally, peptide chain release factor 1 directs the termination of translation in response to the peptide chain termination codons UAG and UAA. This Methylococcus capsulatus (strain ATCC 33009 / NCIMB 11132 / Bath) protein is Peptide chain release factor 1.